A 349-amino-acid polypeptide reads, in one-letter code: Small ribosomal subunit biogenesis GTPase RsgA (349 aa).

The segment at 1–38 is disordered; it reads MSKNKLSKGQERRVQANHQRRLKRTDNKPELDDSQLGE. The CP-type G domain maps to 102-272; the sequence is TSVLNRPDIY…VIDSPGVREF (171 aa). GTP contacts are provided by residues 158–161 and 212–220; these read NKID and GQSGVGKSS. Zn(2+) is bound by residues Cys296, Cys301, His303, and Cys309.

It belongs to the TRAFAC class YlqF/YawG GTPase family. RsgA subfamily. As to quaternary structure, monomer. Associates with 30S ribosomal subunit, binds 16S rRNA. It depends on Zn(2+) as a cofactor.

The protein localises to the cytoplasm. Its function is as follows. One of several proteins that assist in the late maturation steps of the functional core of the 30S ribosomal subunit. Helps release RbfA from mature subunits. May play a role in the assembly of ribosomal proteins into the subunit. Circularly permuted GTPase that catalyzes slow GTP hydrolysis, GTPase activity is stimulated by the 30S ribosomal subunit. The chain is Small ribosomal subunit biogenesis GTPase RsgA from Serratia proteamaculans (strain 568).